The primary structure comprises 708 residues: Exocyst complex component 5 (708 aa).

An N-acetylalanine modification is found at alanine 2. Residues 40–101 adopt a coiled-coil conformation; sequence KRLLEEFVNH…AFQHFQELDE (62 aa). Phosphothreonine occurs at positions 122, 395, and 405. Residue serine 412 is modified to Phosphoserine.

Belongs to the SEC10 family. As to quaternary structure, the exocyst complex is composed of EXOC1, EXOC2, EXOC3, EXOC4, EXOC5, EXOC6, EXOC7 and EXOC8. Interacts with EXOC3L1.

The protein resides in the cytoplasm. The protein localises to the midbody. In terms of biological role, component of the exocyst complex involved in the docking of exocytic vesicles with fusion sites on the plasma membrane. The sequence is that of Exocyst complex component 5 (Exoc5) from Mus musculus (Mouse).